Here is a 238-residue protein sequence, read N- to C-terminus: Uridylate kinase (238 aa).

An ATP-binding site is contributed by 11–14 (KLSG). Gly52 contacts UMP. Positions 53 and 57 each coordinate ATP. UMP contacts are provided by residues Asp72 and 134–141 (TGFSYFTT). ATP contacts are provided by Asn162, Tyr168, and Asp171.

This sequence belongs to the UMP kinase family. In terms of assembly, homohexamer.

It localises to the cytoplasm. It carries out the reaction UMP + ATP = UDP + ADP. It functions in the pathway pyrimidine metabolism; CTP biosynthesis via de novo pathway; UDP from UMP (UMPK route): step 1/1. Its activity is regulated as follows. Inhibited by UTP. Its function is as follows. Catalyzes the reversible phosphorylation of UMP to UDP. The chain is Uridylate kinase from Mesoplasma florum (strain ATCC 33453 / NBRC 100688 / NCTC 11704 / L1) (Acholeplasma florum).